The following is a 254-amino-acid chain: Putative epimerase LsrE (254 aa).

A helical membrane pass occupies residues 14–34 (VALLASYPLSVGILAGQWIAL). Residues histidine 50, aspartate 52, and histidine 81 each contribute to the a divalent metal cation site. The active-site Proton acceptor is the aspartate 52. Substrate is bound by residues histidine 81, 166 to 169 (GYGS), 199 to 201 (DGS), and 221 to 222 (GS). An a divalent metal cation-binding site is contributed by aspartate 199. Residue aspartate 199 is the Proton donor of the active site.

This sequence belongs to the ribulose-phosphate 3-epimerase family. It depends on a divalent metal cation as a cofactor.

The protein localises to the cell membrane. The sequence is that of Putative epimerase LsrE (lsrE) from Salmonella choleraesuis (strain SC-B67).